A 364-amino-acid polypeptide reads, in one-letter code: Protein Wnt-16 (364 aa).

The first 29 residues, 1-29 (MDRAALLALPSLCALWAAVLSLLPCGTQG), serve as a signal peptide directing secretion. 3 disulfide bridges follow: Cys-81-Cys-92, Cys-138-Cys-146, and Cys-148-Cys-167. Asn-142 carries N-linked (GlcNAc...) asparagine glycosylation. N-linked (GlcNAc...) asparagine glycosylation occurs at Asn-188. Intrachain disulfides connect Cys-220-Cys-234, Cys-222-Cys-229, Cys-293-Cys-324, Cys-309-Cys-319, Cys-323-Cys-363, Cys-339-Cys-354, Cys-341-Cys-351, and Cys-346-Cys-347. A lipid anchor (O-palmitoleoyl serine; by PORCN) is attached at Ser-226. A glycan (N-linked (GlcNAc...) asparagine) is linked at Asn-310.

Belongs to the Wnt family. In terms of processing, palmitoleoylation is required for efficient binding to frizzled receptors. Depalmitoleoylation leads to Wnt signaling pathway inhibition.

The protein resides in the secreted. Its subcellular location is the extracellular space. The protein localises to the extracellular matrix. In terms of biological role, ligand for members of the frizzled family of seven transmembrane receptors. Probable developmental protein. May be a signaling molecule which affects the development of discrete regions of tissues. Is likely to signal over only few cell diameters. This chain is Protein Wnt-16 (Wnt16), found in Mus musculus (Mouse).